Reading from the N-terminus, the 232-residue chain is LexA repressor (232 aa).

Positions 35 to 55 form a DNA-binding region, H-T-H motif; it reads IREIGDAAGLQSTSSVAYQLK. Basic and acidic residues predominate over residues 61–85; that stretch reads GFLRRDPNKPRAVDVRHLPETESRS. A disordered region spans residues 61-104; that stretch reads GFLRRDPNKPRAVDVRHLPETESRSSKAATQAKSKAPQAGVHDP. A compositionally biased stretch (low complexity) spans 86–99; it reads SKAATQAKSKAPQA. Active-site for autocatalytic cleavage activity residues include Ser-156 and Lys-193.

Belongs to the peptidase S24 family. As to quaternary structure, homodimer.

The catalysed reaction is Hydrolysis of Ala-|-Gly bond in repressor LexA.. Functionally, represses a number of genes involved in the response to DNA damage (SOS response), including recA and lexA. In the presence of single-stranded DNA, RecA interacts with LexA causing an autocatalytic cleavage which disrupts the DNA-binding part of LexA, leading to derepression of the SOS regulon and eventually DNA repair. The chain is LexA repressor from Corynebacterium glutamicum (strain ATCC 13032 / DSM 20300 / JCM 1318 / BCRC 11384 / CCUG 27702 / LMG 3730 / NBRC 12168 / NCIMB 10025 / NRRL B-2784 / 534).